Consider the following 447-residue polypeptide: ATP-dependent protease ATPase subunit HslU (447 aa).

Residues Ile18, 60–65 (GVGKTE), Asp259, Glu325, and Arg397 contribute to the ATP site.

This sequence belongs to the ClpX chaperone family. HslU subfamily. In terms of assembly, a double ring-shaped homohexamer of HslV is capped on each side by a ring-shaped HslU homohexamer. The assembly of the HslU/HslV complex is dependent on binding of ATP.

The protein resides in the cytoplasm. Its function is as follows. ATPase subunit of a proteasome-like degradation complex; this subunit has chaperone activity. The binding of ATP and its subsequent hydrolysis by HslU are essential for unfolding of protein substrates subsequently hydrolyzed by HslV. HslU recognizes the N-terminal part of its protein substrates and unfolds these before they are guided to HslV for hydrolysis. This chain is ATP-dependent protease ATPase subunit HslU, found in Burkholderia ambifaria (strain MC40-6).